Here is a 579-residue protein sequence, read N- to C-terminus: Isocitrate dehydrogenase kinase/phosphatase (579 aa).

ATP-binding positions include 324-330 (ADGTPGM) and lysine 345. Aspartate 380 is an active-site residue.

It belongs to the AceK family.

The protein localises to the cytoplasm. It carries out the reaction L-seryl-[isocitrate dehydrogenase] + ATP = O-phospho-L-seryl-[isocitrate dehydrogenase] + ADP + H(+). Bifunctional enzyme which can phosphorylate or dephosphorylate isocitrate dehydrogenase (IDH) on a specific serine residue. This is a regulatory mechanism which enables bacteria to bypass the Krebs cycle via the glyoxylate shunt in response to the source of carbon. When bacteria are grown on glucose, IDH is fully active and unphosphorylated, but when grown on acetate or ethanol, the activity of IDH declines drastically concomitant with its phosphorylation. The polypeptide is Isocitrate dehydrogenase kinase/phosphatase (Xanthomonas euvesicatoria pv. vesicatoria (strain 85-10) (Xanthomonas campestris pv. vesicatoria)).